The chain runs to 262 residues: Spindlin-W (262 aa).

Positions 1–49 (MKTPFGKSPAQRSRADAGHTRVSASMMKKRTSHKKHRNNVGPSKPISQP) are disordered. The span at 27 to 38 (MKKRTSHKKHRN) shows a compositional bias: basic residues.

The protein belongs to the SPIN/STSY family. In terms of tissue distribution, expressed predominantly in ovarian granulosa and thecal cell.

The protein resides in the nucleus. May play a role in mitosis. The protein is Spindlin-W (SPINW) of Gallus gallus (Chicken).